The sequence spans 612 residues: Phosphopentomutase (612 aa).

Residue alanine 2 is modified to N-acetylalanine. Positions 63 and 165 each coordinate alpha-D-glucose 1,6-bisphosphate. Serine 165 (phosphoserine intermediate) is an active-site residue. Serine 165, aspartate 322, aspartate 324, and aspartate 326 together coordinate Mg(2+). Serine 165 is subject to Phosphoserine. Alpha-D-glucose 1,6-bisphosphate contacts are provided by aspartate 326, arginine 327, threonine 400, glutamate 424, and lysine 438.

Belongs to the phosphohexose mutase family. As to quaternary structure, monomer. Requires Mg(2+) as cofactor.

It is found in the cytoplasm. The protein localises to the cytosol. The enzyme catalyses alpha-D-ribose 1-phosphate = D-ribose 5-phosphate. The catalysed reaction is 2-deoxy-alpha-D-ribose 1-phosphate = 2-deoxy-D-ribose 5-phosphate. It catalyses the reaction alpha-D-glucose 1-phosphate = alpha-D-glucose 6-phosphate. It carries out the reaction O-phospho-L-seryl-[protein] + alpha-D-glucose 1-phosphate = alpha-D-glucose 1,6-bisphosphate + L-seryl-[protein]. The enzyme catalyses alpha-D-glucose 1,6-bisphosphate + L-seryl-[protein] = O-phospho-L-seryl-[protein] + alpha-D-glucose 6-phosphate. In terms of biological role, catalyzes the conversion of the nucleoside breakdown products ribose-1-phosphate and deoxyribose-1-phosphate to the corresponding 5-phosphopentoses. Catalyzes the reversible isomerization of alpha-D-glucose 1-phosphate to alpha-D-glucose 6-phosphate but with a lower catalytic efficiency. The mechanism proceeds via the intermediate compound alpha-D-glucose 1,6-bisphosphate. In vitro, also has a low glucose 1,6-bisphosphate synthase activity which is most probably not physiologically relevant. The chain is Phosphopentomutase (PGM2) from Pongo abelii (Sumatran orangutan).